The following is an 88-amino-acid chain: UPF0335 protein M446_5200 (88 aa).

Belongs to the UPF0335 family.

The polypeptide is UPF0335 protein M446_5200 (Methylobacterium sp. (strain 4-46)).